A 392-amino-acid polypeptide reads, in one-letter code: ATP phosphoribosyltransferase regulatory subunit (392 aa).

The protein belongs to the class-II aminoacyl-tRNA synthetase family. HisZ subfamily. In terms of assembly, heteromultimer composed of HisG and HisZ subunits.

The protein resides in the cytoplasm. It functions in the pathway amino-acid biosynthesis; L-histidine biosynthesis; L-histidine from 5-phospho-alpha-D-ribose 1-diphosphate: step 1/9. Its function is as follows. Required for the first step of histidine biosynthesis. May allow the feedback regulation of ATP phosphoribosyltransferase activity by histidine. The polypeptide is ATP phosphoribosyltransferase regulatory subunit (Prochlorococcus marinus (strain MIT 9303)).